Reading from the N-terminus, the 184-residue chain is ATP synthase subunit b, chloroplastic (184 aa).

The helical transmembrane segment at 27 to 49 threads the bilayer; it reads LATNPINLSVVLGVLIFFGKGVL.

Belongs to the ATPase B chain family. As to quaternary structure, F-type ATPases have 2 components, F(1) - the catalytic core - and F(0) - the membrane proton channel. F(1) has five subunits: alpha(3), beta(3), gamma(1), delta(1), epsilon(1). F(0) has four main subunits: a(1), b(1), b'(1) and c(10-14). The alpha and beta chains form an alternating ring which encloses part of the gamma chain. F(1) is attached to F(0) by a central stalk formed by the gamma and epsilon chains, while a peripheral stalk is formed by the delta, b and b' chains.

The protein localises to the plastid. It localises to the chloroplast thylakoid membrane. Its function is as follows. F(1)F(0) ATP synthase produces ATP from ADP in the presence of a proton or sodium gradient. F-type ATPases consist of two structural domains, F(1) containing the extramembraneous catalytic core and F(0) containing the membrane proton channel, linked together by a central stalk and a peripheral stalk. During catalysis, ATP synthesis in the catalytic domain of F(1) is coupled via a rotary mechanism of the central stalk subunits to proton translocation. Component of the F(0) channel, it forms part of the peripheral stalk, linking F(1) to F(0). This Gossypium barbadense (Sea Island cotton) protein is ATP synthase subunit b, chloroplastic.